The chain runs to 286 residues: 4-diphosphocytidyl-2-C-methyl-D-erythritol kinase (286 aa).

Lys11 is a catalytic residue. Pro94–Ser104 is an ATP binding site. The active site involves Asp136.

It belongs to the GHMP kinase family. IspE subfamily.

It catalyses the reaction 4-CDP-2-C-methyl-D-erythritol + ATP = 4-CDP-2-C-methyl-D-erythritol 2-phosphate + ADP + H(+). Its pathway is isoprenoid biosynthesis; isopentenyl diphosphate biosynthesis via DXP pathway; isopentenyl diphosphate from 1-deoxy-D-xylulose 5-phosphate: step 3/6. Functionally, catalyzes the phosphorylation of the position 2 hydroxy group of 4-diphosphocytidyl-2C-methyl-D-erythritol. The protein is 4-diphosphocytidyl-2-C-methyl-D-erythritol kinase of Pseudomonas putida (strain GB-1).